Here is a 275-residue protein sequence, read N- to C-terminus: ADP-dependent (S)-NAD(P)H-hydrate dehydratase (275 aa).

The YjeF C-terminal domain maps to 5–273 (TDEILAKVIK…EEIPLFMKKY (269 aa)). The (6S)-NADPHX site is built by Ala-40, Gly-103, and His-151. Gly-214 serves as a coordination point for AMP. Asp-215 contacts (6S)-NADPHX.

Belongs to the NnrD/CARKD family. Homotetramer. Mg(2+) serves as cofactor.

It catalyses the reaction (6S)-NADHX + ADP = AMP + phosphate + NADH + H(+). The catalysed reaction is (6S)-NADPHX + ADP = AMP + phosphate + NADPH + H(+). Its function is as follows. Catalyzes the dehydration of the S-form of NAD(P)HX at the expense of ADP, which is converted to AMP. Together with NAD(P)HX epimerase, which catalyzes the epimerization of the S- and R-forms, the enzyme allows the repair of both epimers of NAD(P)HX, a damaged form of NAD(P)H that is a result of enzymatic or heat-dependent hydration. The polypeptide is ADP-dependent (S)-NAD(P)H-hydrate dehydratase (Lactococcus lactis subsp. lactis (strain IL1403) (Streptococcus lactis)).